Here is a 627-residue protein sequence, read N- to C-terminus: Probable inactive L-type lectin-domain containing receptor kinase III.1 (627 aa).

A signal peptide spans 1–23 (MITFKSIALTIIFLSYFVSCVSS). Topologically, residues 24–303 (QRETKFLNHG…STEKKSNNTM (280 aa)) are extracellular. The interval 26–262 (ETKFLNHGFL…SHFVLGWSFN (237 aa)) is legume-lectin like. 7 N-linked (GlcNAc...) asparagine glycosylation sites follow: Asn-57, Asn-78, Asn-127, Asn-184, Asn-202, Asn-209, and Asn-230. The segment at 272–297 (ITKLPSLPDPPPTLSPSPSPPVSTEK) is disordered. Positions 278–292 (LPDPPPTLSPSPSPP) are enriched in pro residues. The N-linked (GlcNAc...) asparagine glycan is linked to Asn-300. A helical membrane pass occupies residues 304–324 (LIIIVAASATVALMILIFSGF). The Cytoplasmic portion of the chain corresponds to 325-627 (WFLRRDKIFF…PHDDYLFYGV (303 aa)). The Protein kinase domain maps to 353–623 (FDNSKLLGER…TEALPHDDYL (271 aa)). ATP-binding positions include 359–367 (LGERNSGSF) and Lys-381.

It in the C-terminal section; belongs to the protein kinase superfamily. Ser/Thr protein kinase family. This sequence in the N-terminal section; belongs to the leguminous lectin family.

It is found in the cell membrane. The chain is Probable inactive L-type lectin-domain containing receptor kinase III.1 (LECRK31) from Arabidopsis thaliana (Mouse-ear cress).